The primary structure comprises 291 residues: MDARAINSREKADLKYPRNTYIIGDVQGCYRELQELLELIQFDSTKDRLGFVGDLVNRGPNSLEVLRFLKSLSSPLIVLGNHDLYLLILGYGLMPEDSYEHTLHAVLQAPDKLELLEWLRHCPLIRYEKSLSAVLVHAGLPPQWNIKESILHAEEISTALKGPHYLAFLKNLFGNEPSQWKEDLEGQDRLRYICNAFTRMRFCDAKGHLDLESEGKTNQAPSRFRPWFEWRNPQEDNVDIVFGHWAALNGQSSAPHTHALDTGCAWGYKLTAINLKTKERFSVPWQSALRM.

This sequence belongs to the Ap4A hydrolase family.

It catalyses the reaction P(1),P(4)-bis(5'-adenosyl) tetraphosphate + H2O = 2 ADP + 2 H(+). Its function is as follows. Hydrolyzes diadenosine 5',5'''-P1,P4-tetraphosphate to yield ADP. The chain is Bis(5'-nucleosyl)-tetraphosphatase, symmetrical from Coxiella burnetii (strain CbuG_Q212) (Coxiella burnetii (strain Q212)).